The following is a 540-amino-acid chain: Acetyl-coenzyme A carboxylase carboxyl transferase subunit beta, chloroplastic (540 aa).

Residues 229–249 (YSDNGSSSIRTRTSTSSGSSY) form a disordered region. Over residues 233–248 (GSSSIRTRTSTSSGSS) the composition is skewed to low complexity. Positions 267–538 (LWVQCENCYA…TFHPLKSNKV (272 aa)) constitute a CoA carboxyltransferase N-terminal domain. Residues C271, C274, C290, and C293 each contribute to the Zn(2+) site. The C4-type zinc-finger motif lies at 271–293 (CENCYALNYNKLFRSKMNVCEQC).

Belongs to the AccD/PCCB family. In terms of assembly, acetyl-CoA carboxylase is a heterohexamer composed of biotin carboxyl carrier protein, biotin carboxylase and 2 subunits each of ACCase subunit alpha and ACCase plastid-coded subunit beta (accD). Zn(2+) serves as cofactor.

It localises to the plastid. Its subcellular location is the chloroplast stroma. It carries out the reaction N(6)-carboxybiotinyl-L-lysyl-[protein] + acetyl-CoA = N(6)-biotinyl-L-lysyl-[protein] + malonyl-CoA. The protein operates within lipid metabolism; malonyl-CoA biosynthesis; malonyl-CoA from acetyl-CoA: step 1/1. In terms of biological role, component of the acetyl coenzyme A carboxylase (ACC) complex. Biotin carboxylase (BC) catalyzes the carboxylation of biotin on its carrier protein (BCCP) and then the CO(2) group is transferred by the transcarboxylase to acetyl-CoA to form malonyl-CoA. In Amborella trichopoda, this protein is Acetyl-coenzyme A carboxylase carboxyl transferase subunit beta, chloroplastic.